The chain runs to 243 residues: tRNA pseudouridine synthase A (243 aa).

D54 functions as the Nucleophile in the catalytic mechanism. Y112 lines the substrate pocket.

Belongs to the tRNA pseudouridine synthase TruA family. In terms of assembly, homodimer.

It carries out the reaction uridine(38/39/40) in tRNA = pseudouridine(38/39/40) in tRNA. Functionally, formation of pseudouridine at positions 38, 39 and 40 in the anticodon stem and loop of transfer RNAs. This Aster yellows witches'-broom phytoplasma (strain AYWB) protein is tRNA pseudouridine synthase A.